Here is a 707-residue protein sequence, read N- to C-terminus: Golgin candidate 1 (707 aa).

The Cytoplasmic segment spans residues 1–664; it reads MASWLKAAED…RATRFLWRYP (664 aa). Disordered stretches follow at residues 22–106, 121–196, and 234–256; these read VVED…EIHP, VADT…SKRD, and QEPK…ADTT. The span at 38 to 47 shows a compositional bias: low complexity; sequence SGRKGSQGKR. Over residues 56-67 the composition is skewed to basic and acidic residues; that stretch reads VKEESSNKRDSS. Positions 68–80 are enriched in polar residues; it reads GDQSGPGVSQSEV. Positions 83 to 95 are enriched in low complexity; sequence SKSSVSTDETSSS. Basic and acidic residues-rich tracts occupy residues 139 to 150, 185 to 196, and 245 to 254; these read DGDRSESKHADG, TQRELDDSSKRD, and LKREQDRRAD. Coiled coils occupy residues 287–424 and 452–608; these read RVCA…NATK and ADER…KSRV. Residues 665 to 685 form a helical; Signal-anchor for type II membrane protein membrane-spanning segment; sequence IARMFLLFYLVFVHLFLMYLI. The Lumenal segment spans residues 686-707; sequence HRLQEQAEAQEVAAMTNNVFRL.

The protein localises to the golgi apparatus membrane. Golgi matrix protein playing a role in tethering of vesicles to Golgi membranes and in maintaining the overall structure of the Golgi apparatus. This chain is Golgin candidate 1 (GC1), found in Arabidopsis thaliana (Mouse-ear cress).